Consider the following 244-residue polypeptide: L-xylulose reductase (244 aa).

M1 is subject to N-acetylmethionine. 11–39 (LVTGAGKGIGRSTVLALQAAGAHVVAVSR) contacts NADP(+). R21 carries the omega-N-methylarginine modification. S46 is modified (phosphoserine). S136 contributes to the substrate binding site. Y149 (proton acceptor) is an active-site residue. K153 is a catalytic residue.

This sequence belongs to the short-chain dehydrogenases/reductases (SDR) family. In terms of assembly, homotetramer. Highly expressed in kidney and liver. Expressed in epididymis. Weakly expressed in brain, heart, lung, spleen and testis.

Its subcellular location is the membrane. It localises to the cytoplasmic vesicle. It is found in the secretory vesicle. The protein resides in the acrosome. It catalyses the reaction xylitol + NADP(+) = L-xylulose + NADPH + H(+). In terms of biological role, catalyzes the NADPH-dependent reduction of several pentoses, tetroses, trioses, alpha-dicarbonyl compounds and L-xylulose. Participates in the uronate cycle of glucose metabolism. May play a role in the water absorption and cellular osmoregulation in the proximal renal tubules by producing xylitol, an osmolyte, thereby preventing osmolytic stress from occurring in the renal tubules. The polypeptide is L-xylulose reductase (DCXR) (Mesocricetus auratus (Golden hamster)).